The primary structure comprises 216 residues: Imidazole glycerol phosphate synthase subunit HisH (216 aa).

The Glutamine amidotransferase type-1 domain maps to 2-216 (RVAIIDYGSG…LISNFLRWKP (215 aa)). Cys-88 acts as the Nucleophile in catalysis. Active-site residues include His-196 and Glu-198.

As to quaternary structure, heterodimer of HisH and HisF.

It is found in the cytoplasm. The enzyme catalyses 5-[(5-phospho-1-deoxy-D-ribulos-1-ylimino)methylamino]-1-(5-phospho-beta-D-ribosyl)imidazole-4-carboxamide + L-glutamine = D-erythro-1-(imidazol-4-yl)glycerol 3-phosphate + 5-amino-1-(5-phospho-beta-D-ribosyl)imidazole-4-carboxamide + L-glutamate + H(+). It catalyses the reaction L-glutamine + H2O = L-glutamate + NH4(+). It participates in amino-acid biosynthesis; L-histidine biosynthesis; L-histidine from 5-phospho-alpha-D-ribose 1-diphosphate: step 5/9. Functionally, IGPS catalyzes the conversion of PRFAR and glutamine to IGP, AICAR and glutamate. The HisH subunit catalyzes the hydrolysis of glutamine to glutamate and ammonia as part of the synthesis of IGP and AICAR. The resulting ammonia molecule is channeled to the active site of HisF. The protein is Imidazole glycerol phosphate synthase subunit HisH of Rhizobium meliloti (strain 1021) (Ensifer meliloti).